Here is a 230-residue protein sequence, read N- to C-terminus: N-(5'-phosphoribosyl)anthranilate isomerase (230 aa).

The protein belongs to the TrpF family.

The catalysed reaction is N-(5-phospho-beta-D-ribosyl)anthranilate = 1-(2-carboxyphenylamino)-1-deoxy-D-ribulose 5-phosphate. The protein operates within amino-acid biosynthesis; L-tryptophan biosynthesis; L-tryptophan from chorismate: step 3/5. This chain is N-(5'-phosphoribosyl)anthranilate isomerase, found in Syntrophus aciditrophicus (strain SB).